The primary structure comprises 633 residues: Probably inactive receptor-like protein kinase At2g46850 (633 aa).

Residues 1–28 (MPPLFLPSSSSALFLLLLLLLTLQTLTS) form the signal peptide. Over 29–285 (ISLSQPQALR…IKKHNGKKLT (257 aa)) the chain is Extracellular. Residues asparagine 45, asparagine 69, and asparagine 231 are each glycosylated (N-linked (GlcNAc...) asparagine). Residues 286 to 306 (VLAGVLAPLFILGSLLALFCL) traverse the membrane as a helical segment. Residues 307 to 633 (LKRPVTSHKD…SPDSIYLPKT (327 aa)) are Cytoplasmic-facing. The region spanning 355-633 (FQDSQKLTQG…SPDSIYLPKT (279 aa)) is the Protein kinase domain. ATP-binding positions include 361–369 (LTQGKTGTI) and lysine 384.

Belongs to the protein kinase superfamily. Ser/Thr protein kinase family.

It is found in the membrane. This chain is Probably inactive receptor-like protein kinase At2g46850, found in Arabidopsis thaliana (Mouse-ear cress).